A 303-amino-acid chain; its full sequence is Quinolinate synthase (303 aa).

Residues histidine 24 and serine 41 each coordinate iminosuccinate. Cysteine 86 contacts [4Fe-4S] cluster. Iminosuccinate is bound by residues 112–114 (YVN) and serine 129. A [4Fe-4S] cluster-binding site is contributed by cysteine 172. Residues 198–200 (HPE) and threonine 215 each bind iminosuccinate. Position 260 (cysteine 260) interacts with [4Fe-4S] cluster.

This sequence belongs to the quinolinate synthase family. Type 2 subfamily. [4Fe-4S] cluster serves as cofactor.

Its subcellular location is the cytoplasm. It catalyses the reaction iminosuccinate + dihydroxyacetone phosphate = quinolinate + phosphate + 2 H2O + H(+). It functions in the pathway cofactor biosynthesis; NAD(+) biosynthesis; quinolinate from iminoaspartate: step 1/1. Functionally, catalyzes the condensation of iminoaspartate with dihydroxyacetone phosphate to form quinolinate. This Clostridium kluyveri (strain NBRC 12016) protein is Quinolinate synthase.